The sequence spans 433 residues: 23S rRNA (uracil(1939)-C(5))-methyltransferase RlmD (433 aa).

In terms of domain architecture, TRAM spans arginine 10–arginine 68. Residues cysteine 81, cysteine 87, cysteine 90, and cysteine 162 each coordinate [4Fe-4S] cluster. The S-adenosyl-L-methionine site is built by glutamine 265, phenylalanine 294, asparagine 299, glutamate 315, asparagine 342, and aspartate 363. Cysteine 389 (nucleophile) is an active-site residue.

This sequence belongs to the class I-like SAM-binding methyltransferase superfamily. RNA M5U methyltransferase family. RlmD subfamily.

The enzyme catalyses uridine(1939) in 23S rRNA + S-adenosyl-L-methionine = 5-methyluridine(1939) in 23S rRNA + S-adenosyl-L-homocysteine + H(+). In terms of biological role, catalyzes the formation of 5-methyl-uridine at position 1939 (m5U1939) in 23S rRNA. This is 23S rRNA (uracil(1939)-C(5))-methyltransferase RlmD from Shigella flexneri.